The following is a 448-amino-acid chain: MREIVHLQTGQCGNQIGAAFWQTISGEHGLDGSGVYNGSSDLQLERMNVYFNEASGNKYVPRAVLVDLEPGTMDAVRAGPFGQLFRPDNFVFGQSGAGNNWAKGHYTEGAELVDQVVDVVRREAEGCDCLQGFQITHSLGGGTGAGMGTLLISKIREEFPDRMMATFSVVPSPKVSDTVVEPYNATLSVHQLVEHSDETFCIDNEALYDICMRTLKLSNPSYGDLNHLVSAVMSGVTTCLRFPGQLNSDLRKLAVNMVPFPRLHFFMVGFAPLTSRGAHSFRAVSVPELTQQMFDPKNMMAASDFRNGRYLTCSAIFRGKVSMKEVEDQMRNIQSKNQTYFVEWIPNNIQTALCSIPPRGLKMSSTFIGNSTSIQELFKRVGDQFTAMFRRKAFLHWYTGEGMDEMEFTEAESNMNDLVSEYQQYQDASISEGEEEYLEEEEPLEHEE.

GTP contacts are provided by Gln11, Glu69, Ser138, Gly142, Thr143, Gly144, Asn204, and Asn226. Residue Glu69 participates in Mg(2+) binding. Residues 425–448 (YQDASISEGEEEYLEEEEPLEHEE) are disordered. A compositionally biased stretch (acidic residues) spans 432-448 (EGEEEYLEEEEPLEHEE).

The protein belongs to the tubulin family. As to quaternary structure, dimer of alpha and beta chains. A typical microtubule is a hollow water-filled tube with an outer diameter of 25 nm and an inner diameter of 15 nM. Alpha-beta heterodimers associate head-to-tail to form protofilaments running lengthwise along the microtubule wall with the beta-tubulin subunit facing the microtubule plus end conferring a structural polarity. Microtubules usually have 13 protofilaments but different protofilament numbers can be found in some organisms and specialized cells. Mg(2+) serves as cofactor.

It is found in the cytoplasm. The protein localises to the cytoskeleton. Functionally, tubulin is the major constituent of microtubules, a cylinder consisting of laterally associated linear protofilaments composed of alpha- and beta-tubulin heterodimers. Microtubules grow by the addition of GTP-tubulin dimers to the microtubule end, where a stabilizing cap forms. Below the cap, tubulin dimers are in GDP-bound state, owing to GTPase activity of alpha-tubulin. The protein is Tubulin beta chain (benA56) of Aspergillus oryzae (strain ATCC 42149 / RIB 40) (Yellow koji mold).